Reading from the N-terminus, the 92-residue chain is Small ribosomal subunit protein uS19 (92 aa).

It belongs to the universal ribosomal protein uS19 family.

In terms of biological role, protein S19 forms a complex with S13 that binds strongly to the 16S ribosomal RNA. The chain is Small ribosomal subunit protein uS19 from Mycoplasmopsis synoviae (strain 53) (Mycoplasma synoviae).